Consider the following 443-residue polypeptide: ATP-dependent protease ATPase subunit HslU (443 aa).

Residues Ile18, 60–65 (GVGKTE), Asp256, Glu321, and Arg393 each bind ATP.

The protein belongs to the ClpX chaperone family. HslU subfamily. As to quaternary structure, a double ring-shaped homohexamer of HslV is capped on each side by a ring-shaped HslU homohexamer. The assembly of the HslU/HslV complex is dependent on binding of ATP.

Its subcellular location is the cytoplasm. Its function is as follows. ATPase subunit of a proteasome-like degradation complex; this subunit has chaperone activity. The binding of ATP and its subsequent hydrolysis by HslU are essential for unfolding of protein substrates subsequently hydrolyzed by HslV. HslU recognizes the N-terminal part of its protein substrates and unfolds these before they are guided to HslV for hydrolysis. The protein is ATP-dependent protease ATPase subunit HslU of Shigella boydii serotype 18 (strain CDC 3083-94 / BS512).